The sequence spans 346 residues: Histidinol-phosphate aminotransferase (346 aa).

At Lys209 the chain carries N6-(pyridoxal phosphate)lysine.

It belongs to the class-II pyridoxal-phosphate-dependent aminotransferase family. Histidinol-phosphate aminotransferase subfamily. As to quaternary structure, homodimer. Requires pyridoxal 5'-phosphate as cofactor.

The enzyme catalyses L-histidinol phosphate + 2-oxoglutarate = 3-(imidazol-4-yl)-2-oxopropyl phosphate + L-glutamate. It functions in the pathway amino-acid biosynthesis; L-histidine biosynthesis; L-histidine from 5-phospho-alpha-D-ribose 1-diphosphate: step 7/9. The sequence is that of Histidinol-phosphate aminotransferase from Vibrio vulnificus (strain CMCP6).